The primary structure comprises 397 residues: Acylalkylpyrone synthase csyB (397 aa).

Residues Lys50 and 50-57 (KMLEINRK) each bind CoA. The active-site Nucleophile is the Cys155. 214–215 (GD) provides a ligand contact to substrate. CoA is bound by residues Ile267, Gly312, 312-315 (GGYA), Tyr314, and Ala315. The active site involves His377.

The protein belongs to the thiolase-like superfamily. Chalcone/stilbene synthases family. Homodimer.

In terms of biological role, acylalkylpyrone synthase that catalyzes not only the polyketide chain elongation but also the one-pot condensation of two beta-ketoacyl units to produce the 3-acyl-4-hydroxy-6-alkyl-alpha-pyrone (AcAP) scaffold, a precursor of csypyrone B. The enzyme reaction is initiated by the loading of acetoacetyl-CoA onto Cys-155, and subsequent thioester bond cleavage by the nucleophilic water generates the beta-keto acid intermediate, which is placed within a pocket. The second beta-ketoacyl unit is then produced by polyketide chain elongation of fatty acyl-CoA with one molecule of malonyl-CoA, and the condensation with the beta-ketoacid generates the final products. Csypyrone B1 is the major product and contains a propanoic acid side-chain, whereas csypyrones B2 and B3 are minor compounds that contain butyric or pentanoic acid side-chains, respectively. The polypeptide is Acylalkylpyrone synthase csyB (Aspergillus oryzae (strain ATCC 42149 / RIB 40) (Yellow koji mold)).